Here is a 56-residue protein sequence, read N- to C-terminus: Stable protein 1 (56 aa).

A Stress-response A/B barrel domain is found at 1–44 (GYTHAFESTFESKSGLQEYLDSAALAAFAEGFLPTLSQRSFNWG).

This Populus euphratica (Euphrates poplar) protein is Stable protein 1.